We begin with the raw amino-acid sequence, 85 residues long: Large ribosomal subunit protein bL27 (85 aa).

The segment at 1–22 (MAHKKGQGSSRNGRDSPGQRRG) is disordered.

The protein belongs to the bacterial ribosomal protein bL27 family.

This chain is Large ribosomal subunit protein bL27, found in Anaeromyxobacter dehalogenans (strain 2CP-1 / ATCC BAA-258).